We begin with the raw amino-acid sequence, 314 residues long: Deoxymugineic acid synthase 1 (314 aa).

D44 serves as a coordination point for NADP(+). Y49 functions as the Proton donor in the catalytic mechanism. H112 serves as a coordination point for substrate. NADP(+) is bound by residues 158–159 (CN), Q180, 258–266 (FDEGRMKEN), and 273–281 (ELSEEERQR).

Belongs to the aldo/keto reductase family.

It catalyses the reaction 2'-deoxymugineate + NAD(+) = 3''-deamino-3''-oxonicotianamine + NADH + H(+). The enzyme catalyses 2'-deoxymugineate + NADP(+) = 3''-deamino-3''-oxonicotianamine + NADPH + H(+). The protein operates within siderophore biosynthesis. Functionally, catalyzes the reduction of a 3''-keto intermediate during the biosynthesis of 2'-deoxymugineic acid (DMA) from L-Met. Involved in the formation of phytosiderophores (MAs) belonging to the mugineic acid family and required to acquire iron. The chain is Deoxymugineic acid synthase 1 from Zea mays (Maize).